The chain runs to 332 residues: Ribosomal RNA small subunit methyltransferase C (332 aa).

It belongs to the methyltransferase superfamily. RsmC family. As to quaternary structure, monomer.

The protein resides in the cytoplasm. It catalyses the reaction guanosine(1207) in 16S rRNA + S-adenosyl-L-methionine = N(2)-methylguanosine(1207) in 16S rRNA + S-adenosyl-L-homocysteine + H(+). Specifically methylates the guanine in position 1207 of 16S rRNA in the 30S particle. The sequence is that of Ribosomal RNA small subunit methyltransferase C from Pseudomonas syringae pv. syringae (strain B728a).